Reading from the N-terminus, the 600-residue chain is ATP-dependent zinc metalloprotease FtsH 1 (600 aa).

Over 1–8 the chain is Cytoplasmic; that stretch reads MKTHYFKK. The chain crosses the membrane as a helical span at residues 9 to 29; that stretch reads IFNLKFLVIFFSILFCILLIL. At 30-130 the chain is on the extracellular side; the sequence is DLTFERRIKG…PKTDFHLSEL (101 aa). Residues 131–151 form a helical membrane-spanning segment; that stretch reads ILSLVPIVSSTIFMFYIISNI. At 152–600 the chain is on the cytoplasmic side; sequence KKSSGKLNSN…IEQLVVNTKK (449 aa). 215–222 contacts ATP; sequence GPPGTGKT. His-437 is a Zn(2+) binding site. The active site involves Glu-438. The Zn(2+) site is built by His-441 and Asp-513.

It in the central section; belongs to the AAA ATPase family. This sequence in the C-terminal section; belongs to the peptidase M41 family. Homohexamer. Requires Zn(2+) as cofactor.

It is found in the cell membrane. Acts as a processive, ATP-dependent zinc metallopeptidase for both cytoplasmic and membrane proteins. Plays a role in the quality control of integral membrane proteins. The polypeptide is ATP-dependent zinc metalloprotease FtsH 1 (Phytoplasma mali (strain AT)).